The chain runs to 162 residues: Large ribosomal subunit protein uL10 (162 aa).

Belongs to the universal ribosomal protein uL10 family. In terms of assembly, part of the ribosomal stalk of the 50S ribosomal subunit. The N-terminus interacts with L11 and the large rRNA to form the base of the stalk. The C-terminus forms an elongated spine to which L12 dimers bind in a sequential fashion forming a multimeric L10(L12)X complex.

Forms part of the ribosomal stalk, playing a central role in the interaction of the ribosome with GTP-bound translation factors. The polypeptide is Large ribosomal subunit protein uL10 (Vibrio cholerae serotype O1 (strain ATCC 39541 / Classical Ogawa 395 / O395)).